We begin with the raw amino-acid sequence, 227 residues long: Ribose-5-phosphate isomerase A (227 aa).

Residues 26–29 (TGST), 82–85 (DGAD), and 95–98 (KGGG) each bind substrate. Glu-104 (proton acceptor) is an active-site residue. Lys-122 serves as a coordination point for substrate.

Belongs to the ribose 5-phosphate isomerase family. As to quaternary structure, homodimer.

It carries out the reaction aldehydo-D-ribose 5-phosphate = D-ribulose 5-phosphate. The protein operates within carbohydrate degradation; pentose phosphate pathway; D-ribose 5-phosphate from D-ribulose 5-phosphate (non-oxidative stage): step 1/1. Its function is as follows. Catalyzes the reversible conversion of ribose-5-phosphate to ribulose 5-phosphate. The polypeptide is Ribose-5-phosphate isomerase A (Streptococcus pyogenes serotype M1).